The following is a 609-amino-acid chain: Mitochondrial nucleoid-associated protein 1 (609 aa).

Over Met1–Phe554 the chain is Extracellular. 2 disordered regions span residues Gln133–Arg163 and Ser406–His425. Positions Thr146–Glu161 are enriched in basic and acidic residues. Residues Gly555–Trp571 form a helical membrane-spanning segment. Topologically, residues Ser572–Asp609 are cytoplasmic.

It is found in the mitochondrion inner membrane. The protein resides in the mitochondrion matrix. The protein localises to the mitochondrion nucleoid. Functionally, critical regulator of mitochondrial DNA (mtDNA) abundance. Binds dsDNA throughout the mitochondrial genome without sequence specificity and controls mtDNA copy number by promoting its replication. Also plays important roles in mitochondrial metabolism and cell proliferation. The chain is Mitochondrial nucleoid-associated protein 1 from Pongo abelii (Sumatran orangutan).